The primary structure comprises 263 residues: MEIWYAEIINIGNEILTGRTINTNASHIARRLTSLGYTVRRITVVRDEIEEIVSAFREAINRRPRIIISTGGLGPTYDDKTNEGLAKALNIELELNEIAYKMLLEKYSKLNIEITEERKKMAIMPKGSIPVENNAGVAPGILIVYQGITILATPGVPKEMEDVLENFIKKYLKDRPSVKYLETSFLLEGVMESTIAPYVKQLVKKYDLYIKTHPKGQELSKPILEIQIAGSSENEAEIKERIQKALEELKEIGVKLGGTIIQS.

Belongs to the CinA family.

The chain is Protein STK_14130 from Sulfurisphaera tokodaii (strain DSM 16993 / JCM 10545 / NBRC 100140 / 7) (Sulfolobus tokodaii).